The following is a 169-amino-acid chain: Ribosome maturation factor RimM (169 aa).

Positions 97 to 169 (EDEYYWTDLV…TITADWGLDY (73 aa)) constitute a PRC barrel domain.

Belongs to the RimM family. Binds ribosomal protein uS19.

Its subcellular location is the cytoplasm. In terms of biological role, an accessory protein needed during the final step in the assembly of 30S ribosomal subunit, possibly for assembly of the head region. Essential for efficient processing of 16S rRNA. May be needed both before and after RbfA during the maturation of 16S rRNA. It has affinity for free ribosomal 30S subunits but not for 70S ribosomes. The sequence is that of Ribosome maturation factor RimM from Neisseria meningitidis serogroup B (strain ATCC BAA-335 / MC58).